Reading from the N-terminus, the 158-residue chain is Transcription elongation factor GreA (158 aa).

Residues 49–69 (SEYESAKDEQAFVEGRISQIE) adopt a coiled-coil conformation. A disordered region spans residues 102–125 (EEPESYTIVGESESDPLSGKISNE).

The protein belongs to the GreA/GreB family.

Its function is as follows. Necessary for efficient RNA polymerase transcription elongation past template-encoded arresting sites. The arresting sites in DNA have the property of trapping a certain fraction of elongating RNA polymerases that pass through, resulting in locked ternary complexes. Cleavage of the nascent transcript by cleavage factors such as GreA or GreB allows the resumption of elongation from the new 3'terminus. GreA releases sequences of 2 to 3 nucleotides. In Limosilactobacillus fermentum (strain NBRC 3956 / LMG 18251) (Lactobacillus fermentum), this protein is Transcription elongation factor GreA.